The sequence spans 410 residues: Lissencephaly-1 homolog (410 aa).

A LisH domain is found at 7–39 (QRDELNRAIADYLRSNGYEEAYSVFKKEAELDM). A coiled-coil region spans residues 56–82 (TSVIRLQKKVMELESKLNEAKEEFTSG). WD repeat units follow at residues 106-147 (GHRS…RTLK), 148-187 (GHTD…CIRT), 190-229 (GHDH…CVKT), 232-271 (GHRE…CKAE), 274-333 (EHEH…CLMT), 336-377 (GHDN…KTLN), and 379-410 (HEHF…WECR).

Belongs to the WD repeat LIS1/nudF family. As to quaternary structure, can self-associate. Component of the cytosolic PAF-AH (I) heterotetrameric enzyme, which is composed of PAFAH1B1 (beta), PAFAH1B2 (alpha2) and PAFAH1B3 (alpha1) subunits. The catalytic activity of the enzyme resides in the alpha1 (PAFAH1B3) and alpha2 (PAFAH1B2) subunits, whereas the beta subunit (PAFAH1B1) has regulatory activity. Trimer formation is not essential for the catalytic activity. Interacts with dynein, dynactin, nde1 and ndel1.

It localises to the cytoplasm. Its subcellular location is the cytoskeleton. The protein localises to the microtubule organizing center. The protein resides in the centrosome. Its function is as follows. Regulatory subunit (beta subunit) of the cytosolic type I platelet-activating factor (PAF) acetylhydrolase (PAF-AH (I)), an enzyme that catalyzes the hydrolyze of the acetyl group at the sn-2 position of PAF and its analogs and participates in the PAF inactivation. Positively regulates the activity of the minus-end directed microtubule motor protein dynein. May enhance dynein-mediated microtubule sliding by targeting dynein to the microtubule plus end. Required for several dynein- and microtubule-dependent processes such as the maintenance of Golgi integrity, the peripheral transport of microtubule fragments and the coupling of the nucleus and centrosome. May be required for proliferation of neuronal precursors and neuronal migration. The polypeptide is Lissencephaly-1 homolog (pafah1b1) (Xenopus tropicalis (Western clawed frog)).